Reading from the N-terminus, the 1735-residue chain is Cadherin-AgCad1 (1735 aa).

The first 30 residues, 1–30 (MKCVASKFNMWLHLGWLLGLLLVLLPLVRC), serve as a signal peptide directing secretion. Residues 31-1574 (QGWGEPRFET…ALTEADETLQ (1544 aa)) are Extracellular-facing. Residues 166–1456 (VTDCLFNVYH…KVYIVSESNR (1291 aa)) are extracellular domain (EC). Cadherin domains follow at residues 171–273 (FNVY…PPIF), 280–378 (ERIM…IPEI), 379–498 (YMKP…VPKF), 499–620 (GRDE…PPQI), 621–757 (TLPR…APYF), 767–866 (SVKE…QPYH), 879–983 (EKIP…TPKL), 985–1109 (ELAA…TPSI), 1136–1235 (GSPL…EPTF), 1255–1350 (AEDP…PPVF), and 1351–1461 (QQRL…TFVF). 2 short sequence motifs (toxin-binding receptor motif) span residues 1344–1350 (NDNPPVF) and 1446–1456 (AKVYIVSESNR). Positions 1358-1569 (GITTNDRVPK…PLATEALTEA (212 aa)) are CR11-MPED, increases toxicity of activated Cry4B toxin, peptide alone is not toxic. The segment at 1457–1569 (VTFVFLNSVE…PLATEALTEA (113 aa)) is membrane-proximal EC domain (MPED). A helical membrane pass occupies residues 1575–1595 (IILIVVSAALAVLCVILFVAF). Residues 1596–1735 (FIKIRSLNRQ…ETDDELSHRF (140 aa)) are Cytoplasmic-facing. The span at 1701 to 1719 (SLNPMANGTDKSNDGAPTS) shows a compositional bias: polar residues. The tract at residues 1701–1735 (SLNPMANGTDKSNDGAPTSNHKKLDETDDELSHRF) is disordered. A compositionally biased stretch (basic and acidic residues) spans 1722–1735 (KKLDETDDELSHRF).

Larval midgut (at protein level).

The protein resides in the apical cell membrane. The protein localises to the cell projection. Its subcellular location is the microvillus membrane. In terms of biological role, cadherins are calcium-dependent cell adhesion proteins. They preferentially interact with themselves in a homophilic manner in connecting cells. Its function is as follows. (Microbial infection) Binds to and is probably the functional receptor for B.thuringiensis subsp. israelensis (Bti) insecticidal toxin Cry4B. Trichoplusia ni insect cells stably transfected with this protein become suspectible to Cry4B; cells undergo oncosis, they bleb and ruffle after 20-40 minutes, swell after 40-60 minutes and lyse after 90 minutes. Following toxin treatment in the T.in insect system levels of intracellular 3',5'-cyclic AMP (cAMP) rise 12.5-fold; EDTA but not EGTA pretreatment prevents cAMP increase. Inorganic phosphate also rises 3.4-fold after toxin treatment. The chain is Cadherin-AgCad1 from Anopheles gambiae (African malaria mosquito).